The following is an 89-amino-acid chain: MSNKEQLIEMQGKVDEVLPDSRFRVVLENGHTLIAYSGGKMRKHRIRVLAGDTVSLEMSPYDLTKGRITFRHLEPRAGGAPRRPSPHRR.

One can recognise an S1-like domain in the interval 1–73 (MSNKEQLIEM…TKGRITFRHL (73 aa)).

The protein belongs to the IF-1 family. Component of the 30S ribosomal translation pre-initiation complex which assembles on the 30S ribosome in the order IF-2 and IF-3, IF-1 and N-formylmethionyl-tRNA(fMet); mRNA recruitment can occur at any time during PIC assembly.

Its subcellular location is the cytoplasm. Functionally, one of the essential components for the initiation of protein synthesis. Stabilizes the binding of IF-2 and IF-3 on the 30S subunit to which N-formylmethionyl-tRNA(fMet) subsequently binds. Helps modulate mRNA selection, yielding the 30S pre-initiation complex (PIC). Upon addition of the 50S ribosomal subunit IF-1, IF-2 and IF-3 are released leaving the mature 70S translation initiation complex. The chain is Translation initiation factor IF-1 1 from Acidovorax sp. (strain JS42).